We begin with the raw amino-acid sequence, 284 residues long: L-ribulose-5-phosphate 3-epimerase UlaE (284 aa).

The protein belongs to the L-ribulose-5-phosphate 3-epimerase family.

The catalysed reaction is L-ribulose 5-phosphate = L-xylulose 5-phosphate. The protein operates within cofactor degradation; L-ascorbate degradation; D-xylulose 5-phosphate from L-ascorbate: step 3/4. In terms of biological role, catalyzes the isomerization of L-xylulose-5-phosphate to L-ribulose-5-phosphate. Is involved in the anaerobic L-ascorbate utilization. The protein is L-ribulose-5-phosphate 3-epimerase UlaE of Shigella sonnei (strain Ss046).